The chain runs to 315 residues: tRNA dimethylallyltransferase (315 aa).

14 to 21 is an ATP binding site; sequence GPTASGKT. Position 16-21 (16-21) interacts with substrate; it reads TASGKT. Interaction with substrate tRNA stretches follow at residues 39–42, 163–167, and 248–253; these read DSAL, QRIQR, and RCVGYR.

It belongs to the IPP transferase family. In terms of assembly, monomer. Mg(2+) is required as a cofactor.

The enzyme catalyses adenosine(37) in tRNA + dimethylallyl diphosphate = N(6)-dimethylallyladenosine(37) in tRNA + diphosphate. In terms of biological role, catalyzes the transfer of a dimethylallyl group onto the adenine at position 37 in tRNAs that read codons beginning with uridine, leading to the formation of N6-(dimethylallyl)adenosine (i(6)A). This is tRNA dimethylallyltransferase from Paraburkholderia phytofirmans (strain DSM 17436 / LMG 22146 / PsJN) (Burkholderia phytofirmans).